The primary structure comprises 113 residues: Cholecystoxin (113 aa).

An N-terminal signal peptide occupies residues 1–20; it reads MYGGICLCVLLAVLAISSSG. A propeptide spanning residues 21–79 is cleaved from the precursor; that stretch reads QHISRSLNGNSLAAAIEQNFPEKHRPARTPDSNQRVESNIDEKANLGVLLARYLQKARR. The disordered stretch occupies residues 77–97; the sequence is ARRGTNGKPPDPKKESQDYLG. Tyr95 carries the sulfotyrosine modification. The residue at position 101 (Phe101) is a Phenylalanine amide. Residues 102–113 constitute a propeptide that is removed on maturation; sequence GRRSAEEYEYSS.

It belongs to the gastrin/cholecystokinin family. Expressed by the mandibular venom gland.

It localises to the secreted. Its function is as follows. Cholecystokinin-22: hypotensive neuropeptide that binds cholecystokinin receptor type A receptor (CCKAR). Functionally, cholecystokinin-8: hypotensive neuropeptide that binds cholecystokinin receptor type A receptor (CCKAR). This Varanus varius (Lace monitor lizard) protein is Cholecystoxin.